A 420-amino-acid chain; its full sequence is Transcription factor IIIB 50 kDa subunit (420 aa).

A TFIIB-type zinc finger spans residues 3–36 (NGSRCPDCGSSELVEDSHYSQSQLVCSDCGCVVT). Zn(2+) contacts are provided by Cys7, Cys10, Cys28, and Cys31. A run of 2 repeats spans residues 72 to 157 (DLRR…MQMV) and 173 to 249 (VKSY…SLAQ). Residues 108–114 (AARLQKK) form an interaction with target DNA region. The interval 316–387 (TAEVETQQQQ…AVTGDEDISD (72 aa)) is disordered. Positions 322 to 336 (QQQQQQQQGQGQGQQ) are enriched in low complexity. The residue at position 354 (Ser354) is a Phosphoserine. Residues 358 to 364 (LLPPCML) are required for the formation of a ternary complex with DNA and TBP; not required for interaction with TBP in the absence of DNA. Residue Cys362 is modified to Cysteine sulfenic acid (-SOH). A required for interaction with TBP and formation of a ternary complex with DNA and TBP region spans residues 366 to 420 (PPKRTHTLPPESAVTGDEDISDSEIEQYLRTPQEVRDFERAQAASQAAMRVPNPP).

This sequence belongs to the TFIIB family. Component of TFIIIB complexes. The TFIIIB complex has two activities, alpha and beta. The TFIIIB-alpha activity complex is composed of TBP, BDP1, and a complex containing both BRF2 and at least four stably associated proteins; this complex inhibits the transcription by pol III via its phosphorylation by CK2; YY1 facilitates the TFIIIB-alpha complex formation. Interacts with TBP; this interaction promotes recruitment of BRF2 to TATA box-containing promoters. Interacts with TBP and the BURE sequence (GC-rich sequence downstream from the TATA box) to form a strong ternary complex which is joined by BDP1; this ternary complex stimulates pol III transcription. Forms a trimeric complex composed of TBP, BRF2 and mini-SNAPc complex (SNAP43, SNAP50, and the N-terminal third of SNAP190) on the promoter. Assembly of the TBP-BRF2 complex is stimulated by SNAP190. Interacts with MAF1 and SNAPC4. In terms of processing, in response to oxidative stress, Cys-362 is reversibly oxidized to cysteine sulfenic acid. Oxidation of Cys-362 impairs formation of a ternary complex with TBP and DNA and down-regulates expression of target genes in response to oxidative stress.

The protein resides in the nucleus. General activator of RNA polymerase III transcription. Factor exclusively required for RNA polymerase III transcription of genes with promoter elements upstream of the initiation sites. Contributes to the regulation of gene expression; functions as activator in the absence of oxidative stress. Down-regulates expression of target genes in response to oxidative stress. Overexpression protects cells against apoptosis in response to oxidative stress. The protein is Transcription factor IIIB 50 kDa subunit (Brf2) of Mus musculus (Mouse).